The primary structure comprises 177 residues: Adenine phosphoribosyltransferase (177 aa).

The protein belongs to the purine/pyrimidine phosphoribosyltransferase family. Homodimer.

The protein localises to the cytoplasm. The enzyme catalyses AMP + diphosphate = 5-phospho-alpha-D-ribose 1-diphosphate + adenine. It functions in the pathway purine metabolism; AMP biosynthesis via salvage pathway; AMP from adenine: step 1/1. Catalyzes a salvage reaction resulting in the formation of AMP, that is energically less costly than de novo synthesis. The polypeptide is Adenine phosphoribosyltransferase (Pelodictyon phaeoclathratiforme (strain DSM 5477 / BU-1)).